The chain runs to 163 residues: Cyclic pyranopterin monophosphate synthase (163 aa).

Residues 75 to 77 (MCH) and 113 to 114 (ME) contribute to the substrate site. Aspartate 128 is a catalytic residue.

The protein belongs to the MoaC family. In terms of assembly, homohexamer; trimer of dimers.

The catalysed reaction is (8S)-3',8-cyclo-7,8-dihydroguanosine 5'-triphosphate = cyclic pyranopterin phosphate + diphosphate. It functions in the pathway cofactor biosynthesis; molybdopterin biosynthesis. Its function is as follows. Catalyzes the conversion of (8S)-3',8-cyclo-7,8-dihydroguanosine 5'-triphosphate to cyclic pyranopterin monophosphate (cPMP). This is Cyclic pyranopterin monophosphate synthase from Desulforapulum autotrophicum (strain ATCC 43914 / DSM 3382 / VKM B-1955 / HRM2) (Desulfobacterium autotrophicum).